We begin with the raw amino-acid sequence, 505 residues long: Deoxyguanosinetriphosphate triphosphohydrolase (505 aa).

The HD domain occupies arginine 66–cysteine 273.

It belongs to the dGTPase family. Type 1 subfamily. As to quaternary structure, homotetramer. It depends on Mg(2+) as a cofactor.

The catalysed reaction is dGTP + H2O = 2'-deoxyguanosine + triphosphate + H(+). In terms of biological role, dGTPase preferentially hydrolyzes dGTP over the other canonical NTPs. This is Deoxyguanosinetriphosphate triphosphohydrolase from Yersinia enterocolitica serotype O:8 / biotype 1B (strain NCTC 13174 / 8081).